A 236-amino-acid chain; its full sequence is Thiamine import ATP-binding protein ThiQ (236 aa).

The 229-residue stretch at 2–230 (LKLEKITYLY…SAAKASVLGI (229 aa)) folds into the ABC transporter domain. 32–39 (GPSGAGKS) is an ATP binding site.

The protein belongs to the ABC transporter superfamily. Thiamine importer (TC 3.A.1.19.1) family. In terms of assembly, the complex is composed of two ATP-binding proteins (ThiQ), two transmembrane proteins (ThiP) and a solute-binding protein (ThiB).

It is found in the cell inner membrane. The enzyme catalyses thiamine(out) + ATP + H2O = thiamine(in) + ADP + phosphate + H(+). Its function is as follows. Part of the ABC transporter complex ThiBPQ involved in thiamine import. Responsible for energy coupling to the transport system. The chain is Thiamine import ATP-binding protein ThiQ from Yersinia pestis bv. Antiqua (strain Antiqua).